Here is a 265-residue protein sequence, read N- to C-terminus: Putative Tubby-like protein 4 (265 aa).

Residues 1–44 (MPPELLRDVLMRIERSEDTWPSRKNVVSCVGVCKNWRQIFKEIV) form the F-box domain. The FBD domain occupies 228–250 (SYELKLALYFAKNSAILKKFVLR).

This sequence belongs to the TUB family.

In Arabidopsis thaliana (Mouse-ear cress), this protein is Putative Tubby-like protein 4.